The primary structure comprises 246 residues: Probable transcriptional regulatory protein CTC_02215 (246 aa).

The protein belongs to the TACO1 family.

The protein localises to the cytoplasm. The protein is Probable transcriptional regulatory protein CTC_02215 of Clostridium tetani (strain Massachusetts / E88).